The following is a 176-amino-acid chain: NAD(P)H-quinone oxidoreductase subunit 6, chloroplastic (176 aa).

A run of 5 helical transmembrane segments spans residues 10–30 (ILLVFLGSGLILGGLGVVLFT), 32–52 (PIFSAFSLGLVLVCISLFHIL), 61–81 (AQLLIYVGAVNVLIIFAVMFM), 92–112 (LWTVGDGVTSLVCTSILFSLI), and 152–172 (FYLPFELISIILLVALIGAIA).

This sequence belongs to the complex I subunit 6 family. As to quaternary structure, NDH is composed of at least 16 different subunits, 5 of which are encoded in the nucleus.

The protein resides in the plastid. Its subcellular location is the chloroplast thylakoid membrane. The catalysed reaction is a plastoquinone + NADH + (n+1) H(+)(in) = a plastoquinol + NAD(+) + n H(+)(out). The enzyme catalyses a plastoquinone + NADPH + (n+1) H(+)(in) = a plastoquinol + NADP(+) + n H(+)(out). Functionally, NDH shuttles electrons from NAD(P)H:plastoquinone, via FMN and iron-sulfur (Fe-S) centers, to quinones in the photosynthetic chain and possibly in a chloroplast respiratory chain. The immediate electron acceptor for the enzyme in this species is believed to be plastoquinone. Couples the redox reaction to proton translocation, and thus conserves the redox energy in a proton gradient. The polypeptide is NAD(P)H-quinone oxidoreductase subunit 6, chloroplastic (ndhG) (Drimys granadensis).